We begin with the raw amino-acid sequence, 325 residues long: tRNA U34 carboxymethyltransferase (325 aa).

Carboxy-S-adenosyl-L-methionine contacts are provided by residues K91, W105, K110, G130, 152–154 (DPS), M196, Y200, and R315.

The protein belongs to the class I-like SAM-binding methyltransferase superfamily. CmoB family. In terms of assembly, homotetramer.

It catalyses the reaction carboxy-S-adenosyl-L-methionine + 5-hydroxyuridine(34) in tRNA = 5-carboxymethoxyuridine(34) in tRNA + S-adenosyl-L-homocysteine + H(+). Its function is as follows. Catalyzes carboxymethyl transfer from carboxy-S-adenosyl-L-methionine (Cx-SAM) to 5-hydroxyuridine (ho5U) to form 5-carboxymethoxyuridine (cmo5U) at position 34 in tRNAs. This Aeromonas hydrophila subsp. hydrophila (strain ATCC 7966 / DSM 30187 / BCRC 13018 / CCUG 14551 / JCM 1027 / KCTC 2358 / NCIMB 9240 / NCTC 8049) protein is tRNA U34 carboxymethyltransferase.